The primary structure comprises 182 residues: Ribosome-recycling factor (182 aa).

The tract at residues 136-160 (VKKSEKDGDLSEDQSRDEQETIQKE) is disordered.

The protein belongs to the RRF family.

The protein resides in the cytoplasm. Responsible for the release of ribosomes from messenger RNA at the termination of protein biosynthesis. May increase the efficiency of translation by recycling ribosomes from one round of translation to another. This is Ribosome-recycling factor from Prochlorococcus marinus (strain NATL2A).